The primary structure comprises 54 residues: Large ribosomal subunit protein bL33 (54 aa).

The protein belongs to the bacterial ribosomal protein bL33 family.

The polypeptide is Large ribosomal subunit protein bL33 (Corynebacterium efficiens (strain DSM 44549 / YS-314 / AJ 12310 / JCM 11189 / NBRC 100395)).